The primary structure comprises 167 residues: S-ribosylhomocysteine lyase (167 aa).

Fe cation contacts are provided by His54, His58, and Cys128.

This sequence belongs to the LuxS family. Homodimer. Fe cation is required as a cofactor.

It catalyses the reaction S-(5-deoxy-D-ribos-5-yl)-L-homocysteine = (S)-4,5-dihydroxypentane-2,3-dione + L-homocysteine. Involved in the synthesis of autoinducer 2 (AI-2) which is secreted by bacteria and is used to communicate both the cell density and the metabolic potential of the environment. The regulation of gene expression in response to changes in cell density is called quorum sensing. Catalyzes the transformation of S-ribosylhomocysteine (RHC) to homocysteine (HC) and 4,5-dihydroxy-2,3-pentadione (DPD). The protein is S-ribosylhomocysteine lyase of Haemophilus influenzae (strain PittGG).